A 282-amino-acid polypeptide reads, in one-letter code: Protoheme IX farnesyltransferase (282 aa).

The next 9 membrane-spanning stretches (helical) occupy residues 9 to 29 (LAKP…FLLA), 39 to 59 (LPLF…GCVF), 79 to 99 (LVTG…LLIL), 102 to 122 (LVLY…GFIV), 139 to 159 (VLGG…VVNI), 165 to 185 (LALF…IAML), 210 to 230 (IMLF…VLGS), 231 to 251 (ADLF…YKSI), and 261 to 281 (VFAK…CLTM).

The protein belongs to the UbiA prenyltransferase family. Protoheme IX farnesyltransferase subfamily.

Its subcellular location is the cell inner membrane. It catalyses the reaction heme b + (2E,6E)-farnesyl diphosphate + H2O = Fe(II)-heme o + diphosphate. The protein operates within porphyrin-containing compound metabolism; heme O biosynthesis; heme O from protoheme: step 1/1. Its function is as follows. Converts heme B (protoheme IX) to heme O by substitution of the vinyl group on carbon 2 of heme B porphyrin ring with a hydroxyethyl farnesyl side group. This Francisella tularensis subsp. holarctica (strain LVS) protein is Protoheme IX farnesyltransferase.